A 168-amino-acid polypeptide reads, in one-letter code: Peptide deformylase (168 aa).

Fe cation-binding residues include Cys92 and His134. Residue Glu135 is part of the active site. His138 serves as a coordination point for Fe cation.

Belongs to the polypeptide deformylase family. Fe(2+) serves as cofactor.

The catalysed reaction is N-terminal N-formyl-L-methionyl-[peptide] + H2O = N-terminal L-methionyl-[peptide] + formate. In terms of biological role, removes the formyl group from the N-terminal Met of newly synthesized proteins. Requires at least a dipeptide for an efficient rate of reaction. N-terminal L-methionine is a prerequisite for activity but the enzyme has broad specificity at other positions. The chain is Peptide deformylase from Pseudomonas aeruginosa (strain ATCC 15692 / DSM 22644 / CIP 104116 / JCM 14847 / LMG 12228 / 1C / PRS 101 / PAO1).